Here is a 147-residue protein sequence, read N- to C-terminus: Allograft inflammatory factor 1 (147 aa).

Serine 2 is modified (N-acetylserine). Lysine 11 is subject to N6-acetyllysine. Residue serine 39 is modified to Phosphoserine. Positions 45-80 constitute an EF-hand 1 domain; the sequence is SKLEGFKEKYMEFDLNGNGDIDIMSLKRMLEKLGVP. Aspartate 58, asparagine 60, asparagine 62, aspartate 64, threonine 100, and aspartate 105 together coordinate Ca(2+). In terms of domain architecture, EF-hand 2; degenerate spans 81 to 115; it reads KTHLELKKLIGEVSSGSGETFSYPDFLRMMLGKRS. The interval 128-147 is disordered; the sequence is AREKEKPTGPPAKKAISELP.

As to quaternary structure, homodimer (Potential). Monomer. Interacts with LCP1. In terms of processing, phosphorylated on serine residues. Detected in T-lymphocytes and peripheral blood mononuclear cells.

It localises to the cytoplasm. It is found in the cytoskeleton. The protein localises to the cell projection. The protein resides in the ruffle membrane. Its subcellular location is the phagocytic cup. Actin-binding protein that enhances membrane ruffling and RAC activation. Enhances the actin-bundling activity of LCP1. Binds calcium. Plays a role in RAC signaling and in phagocytosis. May play a role in macrophage activation and function. Promotes the proliferation of vascular smooth muscle cells and of T-lymphocytes. Enhances lymphocyte migration. Plays a role in vascular inflammation. This Homo sapiens (Human) protein is Allograft inflammatory factor 1 (AIF1).